Here is a 309-residue protein sequence, read N- to C-terminus: MTAHSLIDDIRAAAPDLRGRLLENQSLSDLTWFRVGGPAQVLFSPADEEDLAAFLAALDPSVPVTVIGLGSNLIVRDGGIPGVTIRLGGKAFGSVEIDGETIRAGTAVPDMRLAKAAAEASLDGLAFFRGIPGSVGGALRMNAGAHGGETTDVLTEARGIDRNGAVRSFTHAEMGFRYRHSSAPDDVIFTSATFRGRPGDREGIEAEMERVTAAREAAQPIRERTGGSTFKNPKGGKAWQLIDAAGCRGLIRGGAQVSEMHCNFLINRGGATAADIEGLGEEVRRRVREHSGFELHWEIKRIGVESSEG.

Residues 34–221 (RVGGPAQVLF…TAAREAAQPI (188 aa)) form the FAD-binding PCMH-type domain. The active site involves Arg-179. The active-site Proton donor is Ser-228. Residue Glu-298 is part of the active site.

It belongs to the MurB family. The cofactor is FAD.

Its subcellular location is the cytoplasm. It carries out the reaction UDP-N-acetyl-alpha-D-muramate + NADP(+) = UDP-N-acetyl-3-O-(1-carboxyvinyl)-alpha-D-glucosamine + NADPH + H(+). It participates in cell wall biogenesis; peptidoglycan biosynthesis. Its function is as follows. Cell wall formation. The chain is UDP-N-acetylenolpyruvoylglucosamine reductase from Methylorubrum populi (strain ATCC BAA-705 / NCIMB 13946 / BJ001) (Methylobacterium populi).